A 602-amino-acid polypeptide reads, in one-letter code: UvrABC system protein C (602 aa).

A GIY-YIG domain is found at 17 to 94 (KTSGCYKMYS…IKKYKPTYNI (78 aa)). Residues 199–234 (SKLLNDIEIKMKEVIMKENFEAAIKLKETKKSLIEI) enclose the UVR domain.

It belongs to the UvrC family. As to quaternary structure, interacts with UvrB in an incision complex.

It localises to the cytoplasm. The UvrABC repair system catalyzes the recognition and processing of DNA lesions. UvrC both incises the 5' and 3' sides of the lesion. The N-terminal half is responsible for the 3' incision and the C-terminal half is responsible for the 5' incision. This chain is UvrABC system protein C, found in Borrelia recurrentis (strain A1).